The following is a 371-amino-acid chain: Cell division control protein 3 (371 aa).

The Septin-type G domain maps to 22-307; it reads AGIDFNIMTV…DEYKTREIGL (286 aa). A G1 motif region spans residues 32-39; sequence GSNGLGKS. Residues 32-39, glycine 116, 195-203, and arginine 257 contribute to the GTP site; these read GSNGLGKS and KSDLLSDSE. The interval 113 to 116 is G3 motif; it reads EVDG. Residues 194 to 197 form a G4 motif region; it reads GKSD.

The protein belongs to the TRAFAC class TrmE-Era-EngA-EngB-Septin-like GTPase superfamily. Septin GTPase family. In terms of assembly, component of the septin complex.

Its function is as follows. Septins are GTPases involved in cytokinesis. The septins localize to the site of cleavage and act as a structural scaffold that recruits different components involved in diverse processes at specific stages during the cell cycle. Septins are also involved in cell morphogenesis, chitin deposition, cell cycle regulation, cell compartmentalization and spore wall formation. This Encephalitozoon cuniculi (strain GB-M1) (Microsporidian parasite) protein is Cell division control protein 3 (CDC3).